Consider the following 474-residue polypeptide: Sialyltransferase-like protein 1 (474 aa).

The Cytoplasmic segment spans residues 1-14 (MRSHQAGRKLPLLQ). The helical; Signal-anchor for type II membrane protein transmembrane segment at 15–35 (LLGCVAVFSVFVFTIQSSFFA) threads the bilayer. Residues 36 to 474 (DNNRKLDLQP…CVRHPLKLDT (439 aa)) lie on the Lumenal side of the membrane. N-linked (GlcNAc...) asparagine glycans are attached at residues asparagine 88, asparagine 120, asparagine 155, and asparagine 243. Residues 376 to 421 (RLQRSQQPTSSKRDGSGQFGNCKVWGDADPTKGPVSGSPDMSETRK) are disordered.

The protein belongs to the glycosyltransferase 29 family. In terms of tissue distribution, highly expressed in inflorescences and siliques and at lower levels in roots, leaves and stems.

It is found in the golgi apparatus membrane. Its function is as follows. Required for normal pollen grain germination and pollen tube growth. May not be required for pollen development and female gametophytic function. This chain is Sialyltransferase-like protein 1, found in Arabidopsis thaliana (Mouse-ear cress).